Reading from the N-terminus, the 356-residue chain is Trifolitoxin operon protein TfxC (356 aa).

The protein is Trifolitoxin operon protein TfxC (tfxC) of Rhizobium leguminosarum bv. trifolii.